Consider the following 129-residue polypeptide: Sulfurtransferase TusD (129 aa).

Cys-79 (cysteine persulfide intermediate) is an active-site residue.

This sequence belongs to the DsrE/TusD family. As to quaternary structure, heterohexamer, formed by a dimer of trimers. The hexameric TusBCD complex contains 2 copies each of TusB, TusC and TusD. The TusBCD complex interacts with TusE.

It is found in the cytoplasm. Its function is as follows. Part of a sulfur-relay system required for 2-thiolation of 5-methylaminomethyl-2-thiouridine (mnm(5)s(2)U) at tRNA wobble positions. Accepts sulfur from TusA and transfers it in turn to TusE. The polypeptide is Sulfurtransferase TusD (Pectobacterium carotovorum subsp. carotovorum (strain PC1)).